Consider the following 188-residue polypeptide: Elongation factor P (188 aa).

This sequence belongs to the elongation factor P family.

Its subcellular location is the cytoplasm. It functions in the pathway protein biosynthesis; polypeptide chain elongation. Functionally, involved in peptide bond synthesis. Stimulates efficient translation and peptide-bond synthesis on native or reconstituted 70S ribosomes in vitro. Probably functions indirectly by altering the affinity of the ribosome for aminoacyl-tRNA, thus increasing their reactivity as acceptors for peptidyl transferase. The chain is Elongation factor P from Wolbachia pipientis subsp. Culex pipiens (strain wPip).